Consider the following 276-residue polypeptide: Cerberus (276 aa).

Positions methionine 1–glycine 20 are cleaved as a signal peptide. N-linked (GlcNAc...) asparagine glycans are attached at residues asparagine 103, asparagine 118, and asparagine 160. 4 disulfides stabilise this stretch: cysteine 175–cysteine 221, cysteine 189–cysteine 235, cysteine 199–cysteine 251, and cysteine 203–cysteine 253. The CTCK domain maps to cysteine 175–asparagine 259. Asparagine 234 carries N-linked (GlcNAc...) asparagine glycosylation.

Belongs to the DAN family. The long chain interacts with nodal/nr-1, bmp4 and wnt8, thereby inhibiting their function. The short chain interacts with nodal/nr-1 but not bmp4 or wnt8. As to expression, expressed in the anterior endomesoderm of the early gastrula with expression expanded laterally around the margin at the endoderm/mesoderm boundary.

It is found in the secreted. In terms of biological role, inhibits wnt, nodal/nr-1 and bmp signaling in the embryo to promote head formation and anterior neural induction. Within the endoderm, acts as an essential mediator of nodal/nr-1-induced cardiogenesis in the overlying mesoderm. The protein is Cerberus of Xenopus tropicalis (Western clawed frog).